The sequence spans 593 residues: UvrABC system protein C (593 aa).

The region spanning 17-94 (MEPGCYLMKD…IKQYQPRYNI (78 aa)) is the GIY-YIG domain. In terms of domain architecture, UVR spans 199-234 (KTILKSLEERMLTASESLDFERAKEYRDLIQHIQNL).

It belongs to the UvrC family. As to quaternary structure, interacts with UvrB in an incision complex.

Its subcellular location is the cytoplasm. Its function is as follows. The UvrABC repair system catalyzes the recognition and processing of DNA lesions. UvrC both incises the 5' and 3' sides of the lesion. The N-terminal half is responsible for the 3' incision and the C-terminal half is responsible for the 5' incision. This chain is UvrABC system protein C, found in Staphylococcus aureus (strain MRSA252).